Here is a 60-residue protein sequence, read N- to C-terminus: UPF0434 protein Daci_3569 (60 aa).

Belongs to the UPF0434 family.

The sequence is that of UPF0434 protein Daci_3569 from Delftia acidovorans (strain DSM 14801 / SPH-1).